We begin with the raw amino-acid sequence, 498 residues long: ATP synthase subunit beta, chloroplastic (498 aa).

172-179 (GGAGVGKT) lines the ATP pocket.

Belongs to the ATPase alpha/beta chains family. As to quaternary structure, F-type ATPases have 2 components, CF(1) - the catalytic core - and CF(0) - the membrane proton channel. CF(1) has five subunits: alpha(3), beta(3), gamma(1), delta(1), epsilon(1). CF(0) has four main subunits: a(1), b(1), b'(1) and c(9-12).

It is found in the plastid. The protein resides in the chloroplast thylakoid membrane. The enzyme catalyses ATP + H2O + 4 H(+)(in) = ADP + phosphate + 5 H(+)(out). In terms of biological role, produces ATP from ADP in the presence of a proton gradient across the membrane. The catalytic sites are hosted primarily by the beta subunits. The sequence is that of ATP synthase subunit beta, chloroplastic from Nicotiana rustica (Aztec tobacco).